The following is a 193-amino-acid chain: uncharacterized protein (193 aa).

Residues 86–181 are a coiled coil; that stretch reads TKQRELLEIL…QVEEVQAEVG (96 aa).

This is an uncharacterized protein from Streptococcus pyogenes serotype M6 (strain ATCC BAA-946 / MGAS10394).